Reading from the N-terminus, the 291-residue chain is Phosphatidylserine decarboxylase proenzyme (291 aa).

Active-site charge relay system; for autoendoproteolytic cleavage activity residues include Asp93, His150, and Ser253. Catalysis depends on Ser253, which acts as the Schiff-base intermediate with substrate; via pyruvic acid; for decarboxylase activity. Ser253 is subject to Pyruvic acid (Ser); by autocatalysis.

This sequence belongs to the phosphatidylserine decarboxylase family. PSD-B subfamily. Prokaryotic type I sub-subfamily. Heterodimer of a large membrane-associated beta subunit and a small pyruvoyl-containing alpha subunit. Requires pyruvate as cofactor. In terms of processing, is synthesized initially as an inactive proenzyme. Formation of the active enzyme involves a self-maturation process in which the active site pyruvoyl group is generated from an internal serine residue via an autocatalytic post-translational modification. Two non-identical subunits are generated from the proenzyme in this reaction, and the pyruvate is formed at the N-terminus of the alpha chain, which is derived from the carboxyl end of the proenzyme. The autoendoproteolytic cleavage occurs by a canonical serine protease mechanism, in which the side chain hydroxyl group of the serine supplies its oxygen atom to form the C-terminus of the beta chain, while the remainder of the serine residue undergoes an oxidative deamination to produce ammonia and the pyruvoyl prosthetic group on the alpha chain. During this reaction, the Ser that is part of the protease active site of the proenzyme becomes the pyruvoyl prosthetic group, which constitutes an essential element of the active site of the mature decarboxylase.

The protein localises to the cell membrane. It catalyses the reaction a 1,2-diacyl-sn-glycero-3-phospho-L-serine + H(+) = a 1,2-diacyl-sn-glycero-3-phosphoethanolamine + CO2. The protein operates within phospholipid metabolism; phosphatidylethanolamine biosynthesis; phosphatidylethanolamine from CDP-diacylglycerol: step 2/2. In terms of biological role, catalyzes the formation of phosphatidylethanolamine (PtdEtn) from phosphatidylserine (PtdSer). This chain is Phosphatidylserine decarboxylase proenzyme, found in Alcanivorax borkumensis (strain ATCC 700651 / DSM 11573 / NCIMB 13689 / SK2).